The sequence spans 341 residues: Ribosomal RNA small subunit methyltransferase H (341 aa).

Residues 47 to 49, Asp-64, Phe-97, Asp-109, and Gln-116 contribute to the S-adenosyl-L-methionine site; that span reads GGY.

This sequence belongs to the methyltransferase superfamily. RsmH family.

It localises to the cytoplasm. It carries out the reaction cytidine(1402) in 16S rRNA + S-adenosyl-L-methionine = N(4)-methylcytidine(1402) in 16S rRNA + S-adenosyl-L-homocysteine + H(+). Specifically methylates the N4 position of cytidine in position 1402 (C1402) of 16S rRNA. This chain is Ribosomal RNA small subunit methyltransferase H, found in Allorhizobium ampelinum (strain ATCC BAA-846 / DSM 112012 / S4) (Agrobacterium vitis (strain S4)).